The following is a 31-amino-acid chain: Potassium channel toxin alpha-KTx 19.2 (31 aa).

Disulfide bonds link cysteine 3/cysteine 22, cysteine 8/cysteine 27, and cysteine 12/cysteine 29.

Belongs to the short scorpion toxin superfamily. Potassium channel inhibitor family. Alpha-KTx 19 subfamily. As to quaternary structure, monomer. In terms of tissue distribution, expressed by the venom gland.

It localises to the secreted. Functionally, blocks voltage-gated potassium channels rKv1.1/KCNA1, rKv1.2/KCNA2, hKv1.3/KCNA3, rKv1.6/KCNA6 (IC(50)=75.9 nM) and, to a lesser extent, Shaker IR (with the inactivation domain removed). This is Potassium channel toxin alpha-KTx 19.2 from Buthus occitanus tunetanus (Common European scorpion).